A 256-amino-acid polypeptide reads, in one-letter code: Thiazole synthase (256 aa).

Lysine 95 serves as the catalytic Schiff-base intermediate with DXP. 1-deoxy-D-xylulose 5-phosphate-binding positions include glycine 156, 182 to 183 (AG), and 204 to 205 (NT).

This sequence belongs to the ThiG family. Homotetramer. Forms heterodimers with either ThiH or ThiS.

The protein localises to the cytoplasm. It catalyses the reaction [ThiS sulfur-carrier protein]-C-terminal-Gly-aminoethanethioate + 2-iminoacetate + 1-deoxy-D-xylulose 5-phosphate = [ThiS sulfur-carrier protein]-C-terminal Gly-Gly + 2-[(2R,5Z)-2-carboxy-4-methylthiazol-5(2H)-ylidene]ethyl phosphate + 2 H2O + H(+). It participates in cofactor biosynthesis; thiamine diphosphate biosynthesis. Catalyzes the rearrangement of 1-deoxy-D-xylulose 5-phosphate (DXP) to produce the thiazole phosphate moiety of thiamine. Sulfur is provided by the thiocarboxylate moiety of the carrier protein ThiS. In vitro, sulfur can be provided by H(2)S. The polypeptide is Thiazole synthase (Salmonella enteritidis PT4 (strain P125109)).